Consider the following 299-residue polypeptide: Protease HtpX homolog (299 aa).

Helical transmembrane passes span 14-34 and 39-59; these read WLLLLVFFLLLGLVGYGVGYL and GFGGLILALVIGFIYAVTMIF. Zn(2+) is bound at residue histidine 143. Glutamate 144 is an active-site residue. Histidine 147 provides a ligand contact to Zn(2+). 2 consecutive transmembrane segments (helical) span residues 153–173 and 198–218; these read IRISTIAVALASAITMLAVMA and IILLIISLIAIILAPLAATLV. Residue glutamate 227 coordinates Zn(2+).

It belongs to the peptidase M48B family. It depends on Zn(2+) as a cofactor.

Its subcellular location is the cell membrane. This is Protease HtpX homolog from Streptococcus thermophilus (strain ATCC BAA-491 / LMD-9).